Consider the following 790-residue polypeptide: cAMP and cAMP-inhibited cGMP 3',5'-cyclic phosphodiesterase 10A (790 aa).

3',5'-cyclic AMP-binding positions include 290-291 (RC), 334-335 (IA), T368, Q387, and H519. Residues 446–763 (TSEEWQGLMR…NQWEKVIRGE (318 aa)) enclose the PDEase domain. Residue H519 is the Proton donor of the active site. H519 contacts 3',5'-cyclic GMP. Residues H523, H557, D558, and D668 each coordinate a divalent metal cation. Q720 is a binding site for 3',5'-cyclic AMP. Q720 is a binding site for 3',5'-cyclic GMP. Residues 768–790 (WISGPGPAPSKSTPEKLNVKVED) are disordered. A compositionally biased stretch (basic and acidic residues) spans 780–790 (TPEKLNVKVED).

This sequence belongs to the cyclic nucleotide phosphodiesterase family. As to quaternary structure, homodimer. A divalent metal cation serves as cofactor. In terms of tissue distribution, detected in striatum (at protein level). Detected in testis and brain.

Its subcellular location is the cytoplasm. The protein localises to the cytosol. The enzyme catalyses a nucleoside 3',5'-cyclic phosphate + H2O = a nucleoside 5'-phosphate + H(+). The catalysed reaction is 3',5'-cyclic AMP + H2O = AMP + H(+). It carries out the reaction 3',5'-cyclic GMP + H2O = GMP + H(+). Its pathway is purine metabolism; 3',5'-cyclic AMP degradation; AMP from 3',5'-cyclic AMP: step 1/1. It functions in the pathway purine metabolism; 3',5'-cyclic GMP degradation; GMP from 3',5'-cyclic GMP: step 1/1. In terms of biological role, plays a role in signal transduction by regulating the intracellular concentration of cyclic nucleotides. Can hydrolyze both cAMP and cGMP, but has higher affinity for cAMP and is more efficient with cAMP as substrate. May play a critical role in regulating cAMP and cGMP levels in the striatum, a region of the brain that contributes to the control of movement and cognition. The sequence is that of cAMP and cAMP-inhibited cGMP 3',5'-cyclic phosphodiesterase 10A (Pde10a) from Mus musculus (Mouse).